The chain runs to 390 residues: Heat stress transcription factor B-2b (390 aa).

The tract at residues 165-212 (TRDGSPVLSGEEQVISSSSSPEPPLVLPQAPSGSGSGGVASGDVGDEN) is disordered. The stretch at 206–237 (GDVGDENERLRRENAQLARELSQMRKLCNNIL) forms a coiled coil. The hydrophobic repeat HR-A/B stretch occupies residues 215 to 244 (LRRENAQLARELSQMRKLCNNILLLMSKYA). Residues 318-322 (RKRMR) carry the Nuclear localization signal motif. The disordered stretch occupies residues 322–363 (RHDGGGDDDHAATVKAEPMDGRPHGKDEQSAETQAWPIYRPR). Residues 323–350 (HDGGGDDDHAATVKAEPMDGRPHGKDEQ) show a composition bias toward basic and acidic residues.

This sequence belongs to the HSF family. Class B subfamily. As to quaternary structure, homotrimer. In terms of processing, exhibits temperature-dependent phosphorylation.

The protein localises to the nucleus. In terms of biological role, transcriptional regulator that specifically binds DNA of heat shock promoter elements (HSE). In Oryza sativa subsp. japonica (Rice), this protein is Heat stress transcription factor B-2b (HSFB2B).